A 204-amino-acid polypeptide reads, in one-letter code: tRNA (guanine-N(7)-)-methyltransferase (204 aa).

Glu-36, Glu-61, and Asp-111 together coordinate S-adenosyl-L-methionine. Asp-111 is a catalytic residue. Substrate-binding positions include Lys-115, Asp-147, and 177–180; that span reads TRFE.

Belongs to the class I-like SAM-binding methyltransferase superfamily. TrmB family.

It carries out the reaction guanosine(46) in tRNA + S-adenosyl-L-methionine = N(7)-methylguanosine(46) in tRNA + S-adenosyl-L-homocysteine. It functions in the pathway tRNA modification; N(7)-methylguanine-tRNA biosynthesis. Catalyzes the formation of N(7)-methylguanine at position 46 (m7G46) in tRNA. In Chlorobium phaeobacteroides (strain DSM 266 / SMG 266 / 2430), this protein is tRNA (guanine-N(7)-)-methyltransferase.